The following is a 193-amino-acid chain: 7-methyl-GTP pyrophosphatase (193 aa).

The active-site Proton acceptor is the D70.

The protein belongs to the Maf family. YceF subfamily. A divalent metal cation serves as cofactor.

The protein resides in the cytoplasm. The enzyme catalyses N(7)-methyl-GTP + H2O = N(7)-methyl-GMP + diphosphate + H(+). Functionally, nucleoside triphosphate pyrophosphatase that hydrolyzes 7-methyl-GTP (m(7)GTP). May have a dual role in cell division arrest and in preventing the incorporation of modified nucleotides into cellular nucleic acids. The protein is 7-methyl-GTP pyrophosphatase of Vibrio parahaemolyticus serotype O3:K6 (strain RIMD 2210633).